We begin with the raw amino-acid sequence, 629 residues long: Forkhead box protein O1-B (629 aa).

4 disordered regions span residues 1 to 54 (MAEP…PEQG), 88 to 134 (CAHP…SRRN), 211 to 308 (SWWM…SPFL), and 359 to 397 (KNNT…QPQV). Residues 36 to 46 (QPGNSNTSSPA) are compositionally biased toward polar residues. 2 stretches are compositionally biased toward low complexity: residues 90–107 (HPQQ…THPQ) and 115–133 (PASG…SSRR). A DNA-binding region (fork-head) is located at residues 136–230 (WGNMSYADLI…KSGKSPRRRA (95 aa)). A compositionally biased stretch (basic residues) spans 240–251 (TKSRGRAAKKKM). 3 stretches are compositionally biased toward polar residues: residues 291-302 (TRASSDASTLSG), 359-377 (KNNT…SPLM), and 385-397 (SYTS…QPQV).

Its subcellular location is the cytoplasm. The protein resides in the nucleus. In terms of biological role, transcription factor that regulates metabolic homeostasis in response to oxidative stress. Binds to the consensus sequence 5'-TT[G/A]TTTTG-3' and the related Daf-16 family binding element (DBE) with consensus sequence 5'-TT[G/A]TTTAC-3'. Main regulator of redox balance and osteoblast numbers and controls bone mass. Orchestrates the endocrine function of the skeleton in regulating glucose metabolism. May act as a positive regulator of apoptosis in cardiac smooth muscle cells as a result of its transcriptional activation of pro-apoptotic genes. This is Forkhead box protein O1-B (foxo1b) from Danio rerio (Zebrafish).